The primary structure comprises 242 residues: NLP effector protein 8 (242 aa).

Positions 1-17 (MHLTVFYLVALCTFASA) are cleaved as a signal peptide. Residues 108–118 (AIMYAWYFPRD) carry the Conserved undecapeptide motif motif. A Conserved heptapeptide motif motif is present at residues 127-133 (GHRNAWE). N-linked (GlcNAc...) asparagine glycosylation is present at Asn206.

It belongs to the Necrosis inducing protein (NPP1) family.

The protein localises to the secreted. Its function is as follows. Probable secreted effector that may act as a pathogen-associated molecular pattern (PAMP) recognized by the plant immune system. The polypeptide is NLP effector protein 8 (Plasmopara viticola (Downy mildew of grapevine)).